The sequence spans 624 residues: UvrABC system protein C (624 aa).

Residues 25 to 104 (AEPGVYFMRD…IKQHQPHFNV (80 aa)) enclose the GIY-YIG domain. The 36-residue stretch at 214 to 249 (SELIDTLTPQMEAAAENLNFEQAARIRDQINGLKTL) folds into the UVR domain.

This sequence belongs to the UvrC family. As to quaternary structure, interacts with UvrB in an incision complex.

The protein localises to the cytoplasm. Functionally, the UvrABC repair system catalyzes the recognition and processing of DNA lesions. UvrC both incises the 5' and 3' sides of the lesion. The N-terminal half is responsible for the 3' incision and the C-terminal half is responsible for the 5' incision. The polypeptide is UvrABC system protein C (Cyanothece sp. (strain PCC 7425 / ATCC 29141)).